Here is a 297-residue protein sequence, read N- to C-terminus: Coiled-coil domain-containing protein 196 (297 aa).

Residues Glu-83–Lys-117 are a coiled coil. Positions Glu-122–Ser-161 are disordered. Basic and acidic residues-rich tracts occupy residues Asn-135 to Ala-144 and Arg-152 to Ser-161.

The chain is Coiled-coil domain-containing protein 196 from Homo sapiens (Human).